The primary structure comprises 196 residues: Regulator of G-protein signaling 1 (196 aa).

The tract at residues 1–27 (MPGMFFSANPKDLKGTDQSLLDDKTQK) is disordered. Positions 11 to 25 (KDLKGTDQSLLDDKT) are enriched in basic and acidic residues. The region spanning 72 to 187 (SLEKLLANQT…LKSNIYLNLL (116 aa)) is the RGS domain.

As to quaternary structure, interacts with GNAI1 and GNAQ.

The protein resides in the cell membrane. The protein localises to the cytoplasm. It is found in the cytosol. In terms of biological role, regulates G protein-coupled receptor signaling cascades, including signaling downstream of the N-formylpeptide chemoattractant receptors and leukotriene receptors. Inhibits B cell chemotaxis toward CXCL12. Inhibits signal transduction by increasing the GTPase activity of G protein alpha subunits, thereby driving them into their inactive GDP-bound form. The protein is Regulator of G-protein signaling 1 (RGS1) of Equus caballus (Horse).